Reading from the N-terminus, the 623-residue chain is V-type proton ATPase catalytic subunit A (623 aa).

ATP is bound at residue 252 to 259 (GAFGCGKT).

This sequence belongs to the ATPase alpha/beta chains family. V-ATPase is a heteromultimeric enzyme composed of a peripheral catalytic V1 complex (main components: subunits A, B, C, D, E, and F) attached to an integral membrane V0 proton pore complex (main component: the proteolipid protein).

It catalyses the reaction ATP + H2O + 4 H(+)(in) = ADP + phosphate + 5 H(+)(out). In terms of biological role, catalytic subunit of the peripheral V1 complex of vacuolar ATPase. V-ATPase vacuolar ATPase is responsible for acidifying a variety of intracellular compartments in eukaryotic cells. The sequence is that of V-type proton ATPase catalytic subunit A from Vigna radiata var. radiata (Mung bean).